A 269-amino-acid chain; its full sequence is Hydroxyethylthiazole kinase (269 aa).

Met-42 is a binding site for substrate. Positions 118 and 164 each coordinate ATP. Gly-191 serves as a coordination point for substrate.

Belongs to the Thz kinase family. Requires Mg(2+) as cofactor.

It catalyses the reaction 5-(2-hydroxyethyl)-4-methylthiazole + ATP = 4-methyl-5-(2-phosphooxyethyl)-thiazole + ADP + H(+). The protein operates within cofactor biosynthesis; thiamine diphosphate biosynthesis; 4-methyl-5-(2-phosphoethyl)-thiazole from 5-(2-hydroxyethyl)-4-methylthiazole: step 1/1. Functionally, catalyzes the phosphorylation of the hydroxyl group of 4-methyl-5-beta-hydroxyethylthiazole (THZ). The sequence is that of Hydroxyethylthiazole kinase from Listeria monocytogenes serotype 4a (strain HCC23).